Here is a 620-residue protein sequence, read N- to C-terminus: Ion-translocating oxidoreductase complex subunit C (620 aa).

2 4Fe-4S ferredoxin-type domains span residues 366–397 (TEMG…QQLY) and 407–436 (KARN…VQYY). Residues C377, C380, C383, C387, C416, C419, C422, and C426 each contribute to the [4Fe-4S] cluster site.

This sequence belongs to the 4Fe4S bacterial-type ferredoxin family. RnfC subfamily. As to quaternary structure, the complex is composed of six subunits: RnfA, RnfB, RnfC, RnfD, RnfE and RnfG. [4Fe-4S] cluster is required as a cofactor.

It is found in the cell inner membrane. In terms of biological role, part of a membrane-bound complex that couples electron transfer with translocation of ions across the membrane. The sequence is that of Ion-translocating oxidoreductase complex subunit C from Yersinia pestis bv. Antiqua (strain Antiqua).